The chain runs to 360 residues: Peptide chain release factor 1 (360 aa).

Gln-235 is subject to N5-methylglutamine.

This sequence belongs to the prokaryotic/mitochondrial release factor family. Methylated by PrmC. Methylation increases the termination efficiency of RF1.

Its subcellular location is the cytoplasm. Peptide chain release factor 1 directs the termination of translation in response to the peptide chain termination codons UAG and UAA. The protein is Peptide chain release factor 1 of Burkholderia ambifaria (strain MC40-6).